Consider the following 50-residue polypeptide: Large ribosomal subunit protein eL39 (50 aa).

The segment covering 1-12 (MGKKSKASKKRL) has biased composition (basic residues). 2 disordered regions span residues 1-20 (MGKK…RQNS) and 30-50 (TNRD…DTDE).

The protein belongs to the eukaryotic ribosomal protein eL39 family.

This is Large ribosomal subunit protein eL39 (rpl39e) from Halobacterium salinarum (strain ATCC 700922 / JCM 11081 / NRC-1) (Halobacterium halobium).